Reading from the N-terminus, the 260-residue chain is Indole-3-glycerol phosphate synthase (260 aa).

This sequence belongs to the TrpC family.

It catalyses the reaction 1-(2-carboxyphenylamino)-1-deoxy-D-ribulose 5-phosphate + H(+) = (1S,2R)-1-C-(indol-3-yl)glycerol 3-phosphate + CO2 + H2O. It participates in amino-acid biosynthesis; L-tryptophan biosynthesis; L-tryptophan from chorismate: step 4/5. The chain is Indole-3-glycerol phosphate synthase from Koribacter versatilis (strain Ellin345).